A 590-amino-acid chain; its full sequence is DNA primase (590 aa).

The CHC2-type zinc-finger motif lies at 37–61 (CPFHTEKTPSFIVNPAGAHYHCFGC). Positions 253–333 (KKVILVEGQA…QMSVFVCKLP (81 aa)) constitute a Toprim domain. 3 residues coordinate Mg(2+): glutamate 259, aspartate 304, and aspartate 306.

It belongs to the DnaG primase family. As to quaternary structure, monomer. Interacts with DnaB. The cofactor is Zn(2+). Mg(2+) serves as cofactor.

It catalyses the reaction ssDNA + n NTP = ssDNA/pppN(pN)n-1 hybrid + (n-1) diphosphate.. Functionally, RNA polymerase that catalyzes the synthesis of short RNA molecules used as primers for DNA polymerase during DNA replication. The protein is DNA primase of Chlamydia pneumoniae (Chlamydophila pneumoniae).